The sequence spans 200 residues: NAD(P)H dehydrogenase (quinone) (200 aa).

In terms of domain architecture, Flavodoxin-like spans 4-191; that stretch reads VLVLYYSSYG…GGARYQGALV (188 aa). FMN is bound by residues 10-15 and 79-81; these read SSYGHI and TRF. Tyr12 serves as a coordination point for NAD(+). Trp99 provides a ligand contact to substrate. Residues 114–120 and His135 contribute to the FMN site; that span reads STASQHG.

It belongs to the WrbA family. Requires FMN as cofactor.

It carries out the reaction a quinone + NADH + H(+) = a quinol + NAD(+). The catalysed reaction is a quinone + NADPH + H(+) = a quinol + NADP(+). In Rhodospirillum centenum (strain ATCC 51521 / SW), this protein is NAD(P)H dehydrogenase (quinone).